The primary structure comprises 1254 residues: AF4/FMR2 family member 3 (1254 aa).

Basic and acidic residues predominate over residues 45-62 (YEPDRNALRRKERERRSQ). Disordered regions lie at residues 45-90 (YEPD…GDEL), 139-190 (AESR…AAQQ), 261-324 (RPMD…GENN), 350-534 (EPSK…EGQD), and 552-752 (KTTC…SVGS). 2 stretches are compositionally biased toward polar residues: residues 67–76 (DSGSFNSGYS) and 143–158 (AQPQ…SSTP). Polar residues predominate over residues 359 to 369 (KDSQLVSSGHS). Residues 406-418 (QQAAQRTALRALA) show a composition bias toward low complexity. Polar residues predominate over residues 421–433 (SVVQQTNCRGSAP). Residues 441 to 472 (SSSSGGSSSSSDSESTSGSDSETESSSSSSES) show a composition bias toward low complexity. The span at 552–561 (KTTCKEEQRP) shows a compositional bias: basic and acidic residues. Over residues 577–605 (SPPAAVAVTAAALPPAVPSAPTESAPAPT) the composition is skewed to low complexity. Residues 615–633 (RRTERTSAGDGANCHRPEE) show a composition bias toward basic and acidic residues. 2 stretches are compositionally biased toward low complexity: residues 694 to 704 (TESSSSSSSSD) and 732 to 749 (AASS…SRAS). Ser-782 bears the Phosphoserine mark. Residues 813-883 (PGVLSAPSAK…ASTNNTLSGN (71 aa)) are disordered. Residues 857–869 (REIKKVQGRKESA) show a composition bias toward basic and acidic residues. Polar residues predominate over residues 873 to 883 (AASTNNTLSGN). Position 908 is a phosphoserine (Ser-908). Disordered stretches follow at residues 919 to 991 (ASED…HRDC) and 1128 to 1171 (AAQA…SGLS). Polar residues-rich tracts occupy residues 922–941 (DLTS…ASSN) and 960–985 (ASHN…SPGS). Composition is skewed to low complexity over residues 1132-1146 (PSPW…GSPS) and 1154-1171 (PASS…SGLS).

The protein belongs to the AF4 family. As to expression, highest levels found in lymphoid tissues, lower levels in brain and lung.

The protein localises to the nucleus. Its function is as follows. Putative transcription activator that may function in lymphoid development and oncogenesis. The chain is AF4/FMR2 family member 3 (Aff3) from Mus musculus (Mouse).